The primary structure comprises 269 residues: Achromobactin transport ATP-binding protein CbrD (269 aa).

An ABC transporter domain is found at 4 to 240 (ITSRELTLGY…ALVKTVFNLD (237 aa)). 36–43 (GSNGCGKS) lines the ATP pocket.

It belongs to the ABC transporter superfamily.

The protein resides in the cell inner membrane. In terms of biological role, part of the binding-protein-dependent transport system CbrABCD for uptake of the siderophore achromobactin. Probably responsible for energy coupling to the transport system. The protein is Achromobactin transport ATP-binding protein CbrD (cbrD) of Dickeya dadantii (strain 3937) (Erwinia chrysanthemi (strain 3937)).